Reading from the N-terminus, the 304-residue chain is N-acetylmuramic acid 6-phosphate etherase (304 aa).

One can recognise an SIS domain in the interval 60–221; it reads GVSVLRHGGR…STAVMVRLGY (162 aa). Glu88 acts as the Proton donor in catalysis. The active site involves Glu119.

The protein belongs to the GCKR-like family. MurNAc-6-P etherase subfamily. Homodimer.

The catalysed reaction is N-acetyl-D-muramate 6-phosphate + H2O = N-acetyl-D-glucosamine 6-phosphate + (R)-lactate. Its pathway is amino-sugar metabolism; N-acetylmuramate degradation. Functionally, specifically catalyzes the cleavage of the D-lactyl ether substituent of MurNAc 6-phosphate, producing GlcNAc 6-phosphate and D-lactate. The sequence is that of N-acetylmuramic acid 6-phosphate etherase from Thermobifida fusca (strain YX).